A 173-amino-acid polypeptide reads, in one-letter code: Calcium-binding protein 5 (173 aa).

4 EF-hand domains span residues D28 to M63, G82 to A99, I105 to E140, and L142 to R173. Positions 41, 43, 45, and 52 each coordinate Ca(2+). Residues D118, N120, D122, E124, E129, D155, N157, D159, T161, and E166 each coordinate Ca(2+).

In terms of assembly, interacts with CACNA1C (via C-terminal CDB motif) in a calcium-dependent manner. Interacts with STXBP1. Interacts with MYO6. As to expression, expressed in inner and outer plexiform layers of the retina, and retinal bipolar cells (at protein level). Expressed in the inner hair cells (IHC) of the cochlea.

The protein resides in the cytoplasm. Functionally, inhibits calcium-dependent inactivation of L-type calcium channel and shifts voltage dependence of activation to more depolarized membrane potentials. Involved in the transmission of light signals. May positively regulate neurotransmitter vesicle endocytosis and exocytosis in a salt-dependent manner. May play a role in the extension and network organization of neurites. In Mus musculus (Mouse), this protein is Calcium-binding protein 5 (Cabp5).